A 220-amino-acid chain; its full sequence is Thioredoxin domain-containing protein (220 aa).

Positions methionine 1–alanine 19 are cleaved as a signal peptide. The Thioredoxin domain maps to threonine 20 to asparagine 141. Residues threonine 20–threonine 181 are Lumenal-facing. A disulfide bridge connects residues cysteine 64 and cysteine 67. Residues isoleucine 182–phenylalanine 202 traverse the membrane as a helical segment. Topologically, residues threonine 203 to lysine 220 are cytoplasmic. A Di-lysine motif motif is present at residues lysine 217–lysine 220.

Belongs to the protein disulfide isomerase family.

The protein resides in the endoplasmic reticulum membrane. In Theileria parva (East coast fever infection agent), this protein is Thioredoxin domain-containing protein.